The primary structure comprises 234 residues: tRNA (guanine-N(1)-)-methyltransferase (234 aa).

S-adenosyl-L-methionine is bound by residues Gly-112 and 132 to 137 (IGDFIL).

Belongs to the RNA methyltransferase TrmD family. In terms of assembly, homodimer.

It is found in the cytoplasm. It catalyses the reaction guanosine(37) in tRNA + S-adenosyl-L-methionine = N(1)-methylguanosine(37) in tRNA + S-adenosyl-L-homocysteine + H(+). Functionally, specifically methylates guanosine-37 in various tRNAs. The protein is tRNA (guanine-N(1)-)-methyltransferase of Campylobacter jejuni (strain RM1221).